The sequence spans 550 residues: Glucose-6-phosphate isomerase (550 aa).

Glu-356 acts as the Proton donor in catalysis. Catalysis depends on residues His-387 and Lys-515.

The protein belongs to the GPI family.

The protein resides in the cytoplasm. The catalysed reaction is alpha-D-glucose 6-phosphate = beta-D-fructose 6-phosphate. The protein operates within carbohydrate biosynthesis; gluconeogenesis. It functions in the pathway carbohydrate degradation; glycolysis; D-glyceraldehyde 3-phosphate and glycerone phosphate from D-glucose: step 2/4. In terms of biological role, catalyzes the reversible isomerization of glucose-6-phosphate to fructose-6-phosphate. The chain is Glucose-6-phosphate isomerase from Vibrio atlanticus (strain LGP32) (Vibrio splendidus (strain Mel32)).